We begin with the raw amino-acid sequence, 79 residues long: Putative defensin-like protein 137 (79 aa).

The signal sequence occupies residues 1–24 (MKKYFQPSFVILIIFTVLVLGVVG). Disulfide bonds link Cys-33-Cys-78, Cys-42-Cys-62, Cys-47-Cys-72, and Cys-51-Cys-74.

Belongs to the DEFL family.

The protein localises to the secreted. The protein is Putative defensin-like protein 137 (LCR14) of Arabidopsis thaliana (Mouse-ear cress).